Reading from the N-terminus, the 123-residue chain is uncharacterized protein (123 aa).

This sequence to insertion element IS1016 transposase.

This is an uncharacterized protein from Haemophilus influenzae (strain ATCC 51907 / DSM 11121 / KW20 / Rd).